A 297-amino-acid chain; its full sequence is 1D-myo-inositol 2-acetamido-2-deoxy-alpha-D-glucopyranoside deacetylase (297 aa).

Positions 14, 17, and 149 each coordinate Zn(2+).

This sequence belongs to the MshB deacetylase family. It depends on Zn(2+) as a cofactor.

It catalyses the reaction 1D-myo-inositol 2-acetamido-2-deoxy-alpha-D-glucopyranoside + H2O = 1D-myo-inositol 2-amino-2-deoxy-alpha-D-glucopyranoside + acetate. Catalyzes the deacetylation of 1D-myo-inositol 2-acetamido-2-deoxy-alpha-D-glucopyranoside (GlcNAc-Ins) in the mycothiol biosynthesis pathway. This Thermomonospora curvata (strain ATCC 19995 / DSM 43183 / JCM 3096 / KCTC 9072 / NBRC 15933 / NCIMB 10081 / Henssen B9) protein is 1D-myo-inositol 2-acetamido-2-deoxy-alpha-D-glucopyranoside deacetylase.